We begin with the raw amino-acid sequence, 123 residues long: Sirohydrochlorin cobaltochelatase (123 aa).

Histidine 9 serves as the catalytic Proton acceptor. Histidine 9 is a Co(2+) binding site. Substrate contacts are provided by residues glutamate 43 and 68–73; that span reads FAAGMH. Residue histidine 73 coordinates Co(2+).

Belongs to the CbiX family. CbiXS subfamily. As to quaternary structure, homotetramer; dimer of dimers.

The enzyme catalyses Co-sirohydrochlorin + 2 H(+) = sirohydrochlorin + Co(2+). It functions in the pathway cofactor biosynthesis; adenosylcobalamin biosynthesis; cob(II)yrinate a,c-diamide from sirohydrochlorin (anaerobic route): step 1/10. Its function is as follows. Catalyzes the insertion of Co(2+) into sirohydrochlorin as part of the anaerobic pathway to cobalamin biosynthesis. The chain is Sirohydrochlorin cobaltochelatase from Sulfolobus acidocaldarius (strain ATCC 33909 / DSM 639 / JCM 8929 / NBRC 15157 / NCIMB 11770).